Consider the following 102-residue polypeptide: U7-agatoxin-Ao1a (102 aa).

An N-terminal signal peptide occupies residues 1–19 (MTQAFFFLLLVSLVASTLS). Positions 20–39 (KEFNFCPRAIDEVCPVKEKR) are excised as a propeptide. The residue at position 101 (W101) is a Tryptophan amide.

This sequence belongs to the venom protein 11 family. 02 (wap-2) subfamily. In terms of processing, contains 5 disulfide bonds. As to expression, expressed by the venom gland.

The protein localises to the secreted. The sequence is that of U7-agatoxin-Ao1a from Agelena orientalis (Funnel-web spider).